We begin with the raw amino-acid sequence, 847 residues long: Glucans biosynthesis glucosyltransferase H (847 aa).

Topologically, residues 1 to 138 (MNKTTEYIDA…KWRTVGTIRR (138 aa)) are cytoplasmic. A helical membrane pass occupies residues 139-156 (YILLILTLAQTVVATWYM). Residues 157 to 193 (KTILPYQGWALINPMDMVGQDIWVSFMQLLPYMLQTG) are Periplasmic-facing. A helical transmembrane segment spans residues 194-216 (ILILFAVLFCWVSAGFWTALMGF). Residues 217–511 (LQLLIGRDKY…LVKGMHPVHR (295 aa)) lie on the Cytoplasmic side of the membrane. A helical transmembrane segment spans residues 512–534 (AVFLTGVMSYLSAPLWFMFLALS). The Periplasmic portion of the chain corresponds to 535–567 (TALQVVHALTEPQYFLQPRQLFPVWPQWRPELA). The chain crosses the membrane as a helical span at residues 568 to 590 (IALFASTMVLLFLPKLLSIMLIW). Over 591–602 (CKGTKEYGGFWR) the chain is Cytoplasmic. The chain crosses the membrane as a helical span at residues 603 to 625 (VTLSLLLEVLFSVLLAPVRMLFH). Topologically, residues 626 to 679 (TVFVVSAFLGWEVVWNSPQRDDDSTPWGEAFMRHGSQLLLGLVWAVGMAWLDLR) are periplasmic. The helical transmembrane segment at 680 to 702 (FLFWLAPIVFSLILSPFVSVISS) threads the bilayer. Residues 703-847 (RSTVGLRTKR…ALQGRTSSAR (145 aa)) are Cytoplasmic-facing.

This sequence belongs to the glycosyltransferase 2 family. OpgH subfamily.

The protein resides in the cell inner membrane. It functions in the pathway glycan metabolism; osmoregulated periplasmic glucan (OPG) biosynthesis. Functionally, involved in the biosynthesis of osmoregulated periplasmic glucans (OPGs). The sequence is that of Glucans biosynthesis glucosyltransferase H from Salmonella typhimurium (strain LT2 / SGSC1412 / ATCC 700720).